Here is a 428-residue protein sequence, read N- to C-terminus: E3 ubiquitin-protein ligase RNF128 (428 aa).

Residues 1-38 form the signal peptide; it reads MGPPPGAGVSCRGGCGFSRLLAWCFLLALSPQAPGSRG. 3 N-linked (GlcNAc...) asparagine glycosylation sites follow: Asn-48, Asn-59, and Asn-101. The region spanning 75 to 183 is the PA domain; that stretch reads SPLEPVAGVL…LKGTKILQSI (109 aa). A helical transmembrane segment spans residues 208–228; the sequence is IFFVSVSFFIITAATVGYFIF. An RING-type; atypical zinc finger spans residues 277–318; it reads CAVCIELYKPNDLVRILTCNHIFHKTCVDPWLLEHRTCPMCK. A disordered region spans residues 346–428; sequence ISNSASSHEE…QETAVREIKS (83 aa). The segment covering 360 to 371 has biased composition (polar residues); sequence ETASSGYASVQG.

Auto-ubiquitinated. Controls the development of T-cell clonal anergy by ubiquitination.

It localises to the cytoplasm. It is found in the endomembrane system. The protein resides in the cytoskeleton. Its subcellular location is the perinuclear region. It carries out the reaction S-ubiquitinyl-[E2 ubiquitin-conjugating enzyme]-L-cysteine + [acceptor protein]-L-lysine = [E2 ubiquitin-conjugating enzyme]-L-cysteine + N(6)-ubiquitinyl-[acceptor protein]-L-lysine.. It functions in the pathway protein modification; protein ubiquitination. In terms of biological role, E3 ubiquitin-protein ligase that catalyzes 'Lys-27', 'Lys-48'- or 'Lys-63'-linked polyubiquitin chains formation and plays a role in different biological processes such as modulation of immune response, cytoskeletal dynamics or protein homeostasis. Inhibits IL2 and IL4 transcription, thereby playing an important role in the induction of the anergic phenotype, a long-term stable state of T-lymphocyte unresponsiveness to antigenic stimulation associated with the blockade of interleukin production. Ubiquitinates ARPC5 with 'Lys-48' linkages and COR1A with 'Lys-63' linkages leading to their degradation, down-regulation of these cytoskeletal components results in impaired lamellipodium formation and reduced accumulation of F-actin at the immunological synapse. Functions in the patterning of the dorsal ectoderm; sensitizes ectoderm to respond to neural-inducing signals. Plays a positive role in innate immune response by promoting 'Lys-63'-linked ubiquitination of TBK1 after RNA- or DNA-virus infection. Regulates alveolar macrophage activation and neutrophil infiltration by interacting with TLR4, targeting it for degradation, and inhibiting NF-kappa-B activation, hence decreasing pro-inflammatory cytokines. Negatively regulates the IL-3/STAT5 signaling pathway by facilitating 'Lys-27'-linked polyubiquitination of IL3RA leading to its degradation via lysosomal pathway. Directly regulates the N-glycosylation process in the endoplasmic reticulum by targeting the glycosyl-transferase RPN1 for ubiquitination and degradation. Other substrates targeted for degradation by RNF128 include transmembrane proteins CD40L, CD83 or the tetraspanin CD151. This Homo sapiens (Human) protein is E3 ubiquitin-protein ligase RNF128 (RNF128).